We begin with the raw amino-acid sequence, 428 residues long: Serine--tRNA ligase (428 aa).

231–233 is a binding site for L-serine; that stretch reads TAE. 262 to 264 contacts ATP; sequence RSE. E285 is a binding site for L-serine. 349 to 352 is an ATP binding site; sequence EISS. An L-serine-binding site is contributed by S385.

Belongs to the class-II aminoacyl-tRNA synthetase family. Type-1 seryl-tRNA synthetase subfamily. As to quaternary structure, homodimer. The tRNA molecule binds across the dimer.

The protein resides in the cytoplasm. The enzyme catalyses tRNA(Ser) + L-serine + ATP = L-seryl-tRNA(Ser) + AMP + diphosphate + H(+). It catalyses the reaction tRNA(Sec) + L-serine + ATP = L-seryl-tRNA(Sec) + AMP + diphosphate + H(+). The protein operates within aminoacyl-tRNA biosynthesis; selenocysteinyl-tRNA(Sec) biosynthesis; L-seryl-tRNA(Sec) from L-serine and tRNA(Sec): step 1/1. In terms of biological role, catalyzes the attachment of serine to tRNA(Ser). Is also able to aminoacylate tRNA(Sec) with serine, to form the misacylated tRNA L-seryl-tRNA(Sec), which will be further converted into selenocysteinyl-tRNA(Sec). This is Serine--tRNA ligase from Cellvibrio japonicus (strain Ueda107) (Pseudomonas fluorescens subsp. cellulosa).